A 506-amino-acid chain; its full sequence is Maturase K (506 aa).

The protein belongs to the intron maturase 2 family. MatK subfamily.

It localises to the plastid. It is found in the chloroplast. Its function is as follows. Usually encoded in the trnK tRNA gene intron. Probably assists in splicing its own and other chloroplast group II introns. The sequence is that of Maturase K from Trifolium hybridum (Alsike clover).